The chain runs to 94 residues: ATP synthase subunit c (94 aa).

The next 2 helical transmembrane spans lie at 15–35 (IGVG…WGLI) and 58–78 (FIFA…AMWF).

It belongs to the ATPase C chain family. In terms of assembly, F-type ATPases have 2 components, F(1) - the catalytic core - and F(0) - the membrane proton channel. F(1) has five subunits: alpha(3), beta(3), gamma(1), delta(1), epsilon(1). F(0) has three main subunits: a(1), b(2) and c(10-14). The alpha and beta chains form an alternating ring which encloses part of the gamma chain. F(1) is attached to F(0) by a central stalk formed by the gamma and epsilon chains, while a peripheral stalk is formed by the delta and b chains.

It localises to the cell inner membrane. Functionally, f(1)F(0) ATP synthase produces ATP from ADP in the presence of a proton or sodium gradient. F-type ATPases consist of two structural domains, F(1) containing the extramembraneous catalytic core and F(0) containing the membrane proton channel, linked together by a central stalk and a peripheral stalk. During catalysis, ATP synthesis in the catalytic domain of F(1) is coupled via a rotary mechanism of the central stalk subunits to proton translocation. Key component of the F(0) channel; it plays a direct role in translocation across the membrane. A homomeric c-ring of between 10-14 subunits forms the central stalk rotor element with the F(1) delta and epsilon subunits. In Hydrogenovibrio crunogenus (strain DSM 25203 / XCL-2) (Thiomicrospira crunogena), this protein is ATP synthase subunit c.